We begin with the raw amino-acid sequence, 529 residues long: Cytochrome P450 monooxygenase ausG (529 aa).

A helical transmembrane segment spans residues 31-51; sequence LLVVCGLPGLLLLFFVTAILL. Cys470 contacts heme.

Belongs to the cytochrome P450 family. Requires heme as cofactor.

Its subcellular location is the membrane. Its pathway is secondary metabolite biosynthesis; terpenoid biosynthesis. In terms of biological role, cytochrome P450 monooxygenase; part of the gene cluster that mediates the biosynthesis of calidodehydroaustin, a fungal meroterpenoid. The first step of the pathway is the synthesis of 3,5-dimethylorsellinic acid by the polyketide synthase ausA. 3,5-dimethylorsellinic acid is then prenylated by the polyprenyl transferase ausN. Further epoxidation by the FAD-dependent monooxygenase ausM and cyclization by the probable terpene cyclase ausL lead to the formation of protoaustinoid A. Protoaustinoid A is then oxidized to spiro-lactone preaustinoid A3 by the combined action of the FAD-binding monooxygenases ausB and ausC, and the dioxygenase ausE. Acid-catalyzed keto-rearrangement and ring contraction of the tetraketide portion of preaustinoid A3 by ausJ lead to the formation of preaustinoid A4. The aldo-keto reductase ausK, with the help of ausH, is involved in the next step by transforming preaustinoid A4 into isoaustinone which is in turn hydroxylated by the P450 monooxygenase ausI to form austinolide. The cytochrome P450 monooxygenase ausG modifies austinolide to austinol. Austinol is further acetylated to austin by the O-acetyltransferase ausP, which spontaneously changes to dehydroaustin. The cytochrome P450 monooxygenase ausR then converts dehydroaustin is into 7-dehydrodehydroaustin. The hydroxylation catalyzed by ausR permits the O-acetyltransferase ausQ to add an additional acetyl group to the molecule, leading to the formation of acetoxydehydroaustin. The short chain dehydrogenase ausT catalyzes the reduction of the double bond present between carbon atoms 1 and 2 to convert 7-dehydrodehydroaustin into 1,2-dihydro-7-hydroxydehydroaustin. AusQ catalyzes not only an acetylation reaction but also the addition of the PKS ausV diketide product to 1,2-dihydro-7-hydroxydehydroaustin, forming precalidodehydroaustin. Finally, the iron/alpha-ketoglutarate-dependent dioxygenase converts precalidodehydroaustin into calidodehydroaustin. This Aspergillus calidoustus protein is Cytochrome P450 monooxygenase ausG.